Consider the following 371-residue polypeptide: Putative glutamate--cysteine ligase 2 (371 aa).

The protein belongs to the glutamate--cysteine ligase type 2 family. YbdK subfamily.

The enzyme catalyses L-cysteine + L-glutamate + ATP = gamma-L-glutamyl-L-cysteine + ADP + phosphate + H(+). Its function is as follows. ATP-dependent carboxylate-amine ligase which exhibits weak glutamate--cysteine ligase activity. The chain is Putative glutamate--cysteine ligase 2 from Burkholderia thailandensis (strain ATCC 700388 / DSM 13276 / CCUG 48851 / CIP 106301 / E264).